The sequence spans 211 residues: MRNRIIVSACAALAMFAIQAPAHAAATDQLQSFVTGVKSARGEFTQRQVKGQGANGKVTGTSSGTFVFSRPGKFTWRYTKPYDQLLQADGQTLYIYDKDLNQVTERKLDGALGSSPAAILFGSNDLEKNFVVKNGPTRDGVEWLELTPKAKDTQFERIGIGFKAGNLEAMELRDAFGNTTLLTFTGMQKNPPLAADAFRFTVPKGADVMKQ.

Positions 1-24 are cleaved as a signal peptide; it reads MRNRIIVSACAALAMFAIQAPAHA.

This sequence belongs to the LolA family. Monomer.

The protein localises to the periplasm. Its function is as follows. Participates in the translocation of lipoproteins from the inner membrane to the outer membrane. Only forms a complex with a lipoprotein if the residue after the N-terminal Cys is not an aspartate (The Asp acts as a targeting signal to indicate that the lipoprotein should stay in the inner membrane). In Cupriavidus necator (strain ATCC 17699 / DSM 428 / KCTC 22496 / NCIMB 10442 / H16 / Stanier 337) (Ralstonia eutropha), this protein is Outer-membrane lipoprotein carrier protein.